The sequence spans 421 residues: ATP-dependent RNA helicase RhlB (421 aa).

The short motif at 9 to 37 (QKFSDFALHPKVVEVLEKKGFHNCTPIQA) is the Q motif element. The Helicase ATP-binding domain occupies 40–219 (LPLTLAGRDV…FEQMNNAEYI (180 aa)). Position 53–60 (53–60 (AQTGTGKT)) interacts with ATP. Positions 165–168 (DEAD) match the DEAD box motif. A Helicase C-terminal domain is found at 245–390 (RLLQTLIEEE…VSKYNPDALM (146 aa)). Residues 392–421 (DLPKPLRLTRPRTGNGPRRTGAPRNRRRSG) are disordered. Residues 402 to 414 (PRTGNGPRRTGAP) show a composition bias toward low complexity.

Belongs to the DEAD box helicase family. RhlB subfamily. As to quaternary structure, component of the RNA degradosome, which is a multiprotein complex involved in RNA processing and mRNA degradation.

It localises to the cytoplasm. The catalysed reaction is ATP + H2O = ADP + phosphate + H(+). Its function is as follows. DEAD-box RNA helicase involved in RNA degradation. Has RNA-dependent ATPase activity and unwinds double-stranded RNA. The protein is ATP-dependent RNA helicase RhlB of Shigella boydii serotype 18 (strain CDC 3083-94 / BS512).